A 548-amino-acid polypeptide reads, in one-letter code: Biotin-dependent acetyl-/propionyl-coenzyme A carboxylase beta5 subunit (548 aa).

A disordered region spans residues M1–H23. Basic and acidic residues predominate over residues R7–D21. A CoA carboxyltransferase N-terminal domain is found at T25–Q281. The CoA carboxyltransferase C-terminal domain occupies D295–K541.

Belongs to the AccD/PCCB family. In terms of assembly, the biotin-dependent acyl-CoA carboxylase complex is composed of AccA3, which contains the biotin carboxylase (BC) and biotin carboxyl carrier protein (BCCP) domains, and AccD5, which contains the carboxyl transferase (CT) domain.

The catalysed reaction is N(6)-carboxybiotinyl-L-lysyl-[protein] + acetyl-CoA = N(6)-biotinyl-L-lysyl-[protein] + malonyl-CoA. The enzyme catalyses N(6)-carboxybiotinyl-L-lysyl-[protein] + propanoyl-CoA = methylmalonyl-CoA + N(6)-biotinyl-L-lysyl-[protein]. It functions in the pathway lipid metabolism; mycolic acid biosynthesis. Component of a biotin-dependent acyl-CoA carboxylase complex. This subunit transfers the CO2 from carboxybiotin to the CoA ester substrate. When associated with the alpha3 subunit AccA3, is involved in the carboxylation of acetyl-CoA and propionyl-CoA. The sequence is that of Biotin-dependent acetyl-/propionyl-coenzyme A carboxylase beta5 subunit (accD5) from Mycobacterium tuberculosis (strain CDC 1551 / Oshkosh).